Reading from the N-terminus, the 238-residue chain is Cysteine-rich venom protein pseudechetoxin-like (238 aa).

A signal peptide spans 1–19 (MIAFIVLLSLAAVLQQSSG). A propeptide spanning residues 20 to 28 (TVDFASESS) is cleaved from the precursor. An SCP domain is found at 38 to 164 (VDKHNALRRS…STKYLYVCQY (127 aa)). 8 disulfides stabilise this stretch: C75-C153, C92-C165, C148-C162, C184-C191, C187-C196, C200-C233, C209-C227, and C218-C231. One can recognise a ShKT domain in the interval 200–233 (CKYEDDFSNCKALAKNSKCQTEWIKSKCPAACFC).

Belongs to the CRISP family. Expressed by the venom gland.

Its subcellular location is the secreted. Functionally, blocks olfactory (CNGA2) and retinal (CNGA1) CNG channel currents. Does not affect neither depolarization- nor caffeine-induced contraction of smooth muscle. This Notechis scutatus scutatus (Mainland tiger snake) protein is Cysteine-rich venom protein pseudechetoxin-like.